Reading from the N-terminus, the 255-residue chain is 5'-nucleotidase SurE (255 aa).

Residues D8, D9, S40, and N93 each contribute to the a divalent metal cation site.

This sequence belongs to the SurE nucleotidase family. It depends on a divalent metal cation as a cofactor.

The protein resides in the cytoplasm. The enzyme catalyses a ribonucleoside 5'-phosphate + H2O = a ribonucleoside + phosphate. Functionally, nucleotidase that shows phosphatase activity on nucleoside 5'-monophosphates. In Bradyrhizobium sp. (strain BTAi1 / ATCC BAA-1182), this protein is 5'-nucleotidase SurE.